We begin with the raw amino-acid sequence, 261 residues long: Neurexophilin-2 (261 aa).

An N-terminal signal peptide occupies residues 1–22 (MSLRPLPLLVVPGLLQLLFCDS). Residues 23–87 (EEVIHNTESV…WDWLANITEI (65 aa)) are II. Residues Asn83, Asn136, Asn146, and Asn152 are each glycosylated (N-linked (GlcNAc...) asparagine). Positions 88 to 166 (QEQLARTKRR…LVPPSKVVEF (79 aa)) are III. Residues 167-175 (EISPQSTLE) are IV (linker domain). Positions 176–261 (TKESKSFNCH…HSETPYLSFG (86 aa)) are v (Cys-rich).

This sequence belongs to the neurexophilin family. May be proteolytically processed at the boundary between the N-terminal non-conserved and the central conserved domain in neuron-like cells.

It localises to the secreted. Its function is as follows. May be signaling molecules that resemble neuropeptides and that act by binding to alpha-neurexins and possibly other receptors. The protein is Neurexophilin-2 (Nxph2) of Mus musculus (Mouse).